We begin with the raw amino-acid sequence, 440 residues long: UDP-N-acetylmuramoylalanine--D-glutamate ligase (440 aa).

Residue 113–119 (GTNGKST) coordinates ATP.

It belongs to the MurCDEF family.

It localises to the cytoplasm. It catalyses the reaction UDP-N-acetyl-alpha-D-muramoyl-L-alanine + D-glutamate + ATP = UDP-N-acetyl-alpha-D-muramoyl-L-alanyl-D-glutamate + ADP + phosphate + H(+). Its pathway is cell wall biogenesis; peptidoglycan biosynthesis. In terms of biological role, cell wall formation. Catalyzes the addition of glutamate to the nucleotide precursor UDP-N-acetylmuramoyl-L-alanine (UMA). The polypeptide is UDP-N-acetylmuramoylalanine--D-glutamate ligase (Buchnera aphidicola subsp. Acyrthosiphon pisum (strain Tuc7)).